We begin with the raw amino-acid sequence, 358 residues long: MPGNTFGQVFRLTTWGESHGPAVGCVVDGCPAGLDISEDYIQHELNRRRVGQSRVTSARQESDQVQILSGVFEGRATGAPISMLVFNTDAKPGHYENIKDLYRPGHADYTWDVKYGFRDWRGGGRSSARETIGRVAGGAVAKRLLAQHGVSIIAWTAQLGDLKAEVIDESEIERNIMRCPDARVAALMVERVEQARRSLDSLGGIVEVRARGVPPGLGEPVFDKLQADIGKAMFSIPAIKGVEFGEGFGVAHMTGSVHNDPFERRADGTIGTSSNHHGGILGGISTGEEIVLRIAAKPPASIARLQRTVDREGNPTEIEIHGRHDPTVLPRLVPIAEAMLALVLADHLLRQRLARMER.

Residues arginine 48 and arginine 54 each contribute to the NADP(+) site. Residues 125-127 (RSS), glycine 282, 297-301 (KPPAS), and arginine 323 each bind FMN.

The protein belongs to the chorismate synthase family. In terms of assembly, homotetramer. Requires FMNH2 as cofactor.

It carries out the reaction 5-O-(1-carboxyvinyl)-3-phosphoshikimate = chorismate + phosphate. It participates in metabolic intermediate biosynthesis; chorismate biosynthesis; chorismate from D-erythrose 4-phosphate and phosphoenolpyruvate: step 7/7. Catalyzes the anti-1,4-elimination of the C-3 phosphate and the C-6 proR hydrogen from 5-enolpyruvylshikimate-3-phosphate (EPSP) to yield chorismate, which is the branch point compound that serves as the starting substrate for the three terminal pathways of aromatic amino acid biosynthesis. This reaction introduces a second double bond into the aromatic ring system. In Roseiflexus castenholzii (strain DSM 13941 / HLO8), this protein is Chorismate synthase.